Reading from the N-terminus, the 373-residue chain is MQNLVSNRRKSKRIYVGNVPIGDGAPIAVQSMTNTQTTNVIATVNQIKALERLGADIVRVSVPTLHAAEQFKLIKEQVDVPLVADIHFDYRIALKVAKYGVNCLRINPGNIGNKKRIRSVVDCARDHHIPIRIGINAGSLEKDLQNKYSKPTPEVLLESALRQIDILDRLNFDQFKVSVKASDVLLAVRSYRLLASQIDQPLHIGITEAGGARSGAVKSAIGIGLLLSEGIGDTLRVSLASDPIEEVKVAFDILKSLRIRTRGINFIACPTCSRQEFDVIGTVKELEQRLEDIVTPMDISIIGCIVNGLGEALMSNIGVTGGPRNSSFYEDGIRQHHRFDNKFIIDQLEARIRAKAMMLEENNKITVINLPKK.

C269, C272, C304, and E311 together coordinate [4Fe-4S] cluster.

This sequence belongs to the IspG family. The cofactor is [4Fe-4S] cluster.

It catalyses the reaction (2E)-4-hydroxy-3-methylbut-2-enyl diphosphate + oxidized [flavodoxin] + H2O + 2 H(+) = 2-C-methyl-D-erythritol 2,4-cyclic diphosphate + reduced [flavodoxin]. Its pathway is isoprenoid biosynthesis; isopentenyl diphosphate biosynthesis via DXP pathway; isopentenyl diphosphate from 1-deoxy-D-xylulose 5-phosphate: step 5/6. Its function is as follows. Converts 2C-methyl-D-erythritol 2,4-cyclodiphosphate (ME-2,4cPP) into 1-hydroxy-2-methyl-2-(E)-butenyl 4-diphosphate. The sequence is that of 4-hydroxy-3-methylbut-2-en-1-yl diphosphate synthase (flavodoxin) from Baumannia cicadellinicola subsp. Homalodisca coagulata.